A 155-amino-acid polypeptide reads, in one-letter code: Rhombotin-1 (155 aa).

2 LIM zinc-binding domains span residues 21–83 (KGCA…LFGT) and 85–147 (GNCA…GQLN).

It localises to the nucleus. Its function is as follows. May be involved in gene regulation within neural lineage cells potentially by direct DNA binding or by binding to other transcription factors. This Danio rerio (Zebrafish) protein is Rhombotin-1.